We begin with the raw amino-acid sequence, 434 residues long: Nicotinate phosphoribosyltransferase (434 aa).

Residue His242 is modified to Phosphohistidine; by autocatalysis.

This sequence belongs to the NAPRTase family. Post-translationally, transiently phosphorylated on a His residue during the reaction cycle. Phosphorylation strongly increases the affinity for substrates and increases the rate of nicotinate D-ribonucleotide production. Dephosphorylation regenerates the low-affinity form of the enzyme, leading to product release.

It catalyses the reaction nicotinate + 5-phospho-alpha-D-ribose 1-diphosphate + ATP + H2O = nicotinate beta-D-ribonucleotide + ADP + phosphate + diphosphate. The protein operates within cofactor biosynthesis; NAD(+) biosynthesis; nicotinate D-ribonucleotide from nicotinate: step 1/1. In terms of biological role, catalyzes the synthesis of beta-nicotinate D-ribonucleotide from nicotinate and 5-phospho-D-ribose 1-phosphate at the expense of ATP. This Rhizobium etli (strain CIAT 652) protein is Nicotinate phosphoribosyltransferase.